Reading from the N-terminus, the 436-residue chain is AP-2 complex subunit mu-B (436 aa).

The region spanning 170-435 (RNELFLDVLE…IGRSGIYETR (266 aa)) is the MHD domain. Residues lysine 342, lysine 346, and lysine 355 each contribute to the a 1,2-diacyl-sn-glycero-3-phospho-(1D-myo-inositol-3,4,5-trisphosphate) site.

The protein belongs to the adaptor complexes medium subunit family. In terms of assembly, adaptor protein complex 2 (AP-2) is a heterotetramer composed of two large adaptins (alpha-type subunit and beta-type subunit), a medium adaptin (mu-type subunit) and a small adaptin (sigma-type subunit).

Its subcellular location is the cell membrane. It localises to the membrane. The protein resides in the coated pit. In terms of biological role, component of the adaptor complexes which link clathrin to receptors in coated vesicles. Clathrin-associated protein complexes are believed to interact with the cytoplasmic tails of membrane proteins, leading to their selection and concentration. AP50 is a subunit of the plasma membrane adaptor. The complex binds polyphosphoinositide-containing lipids. This Danio rerio (Zebrafish) protein is AP-2 complex subunit mu-B (ap2m1b).